Here is a 264-residue protein sequence, read N- to C-terminus: Major prion protein 1 (264 aa).

Positions 1-24 are cleaved as a signal peptide; the sequence is MVKSHIGSWILVLFVAMWSDVALC. Residues 25–241 form an interaction with GRB2, ERI3 and SYN1 region; it reads KKRPKPGGGW…ESEAYYQRGA (217 aa). Residues 28–118 are disordered; sequence PKPGGGWNTG…QWNKPSKPKT (91 aa). 6 tandem repeats follow at residues 54 to 62, 63 to 70, 71 to 78, 79 to 86, 87 to 94, and 95 to 103. Positions 54-103 are 6 X 8 AA tandem repeats of P-H-G-G-G-W-G-Q; the sequence is SQGGGGWGQPHGGGWGQPHGGGWGQPHGGGWGQPHGGGWGQPHGGGGWGQ. The segment covering 55 to 107 has biased composition (gly residues); sequence QGGGGWGQPHGGGWGQPHGGGWGQPHGGGWGQPHGGGWGQPHGGGGWGQGGTH. Residues His-72, Gly-73, Gly-74, His-80, Gly-81, Gly-82, His-88, Gly-89, Gly-90, His-96, Gly-98, and Gly-99 each coordinate Cu(2+). Cys-190 and Cys-225 are joined by a disulfide. N-linked (GlcNAc...) asparagine glycosylation is found at Asn-192 and Asn-208. Ala-241 carries the GPI-anchor amidated alanine lipid modification. The propeptide at 242–264 is removed in mature form; the sequence is SVILFSSPPVILLISFLIFLIVG.

Belongs to the prion family. Monomer and homodimer. Has a tendency to aggregate into amyloid fibrils containing a cross-beta spine, formed by a steric zipper of superposed beta-strands. Soluble oligomers may represent an intermediate stage on the path to fibril formation. Copper binding may promote oligomerization. Interacts with GRB2, APP, ERI3/PRNPIP and SYN1. Mislocalized cytosolically exposed PrP interacts with MGRN1; this interaction alters MGRN1 subcellular location and causes lysosomal enlargement. Interacts with KIAA1191.

The protein resides in the cell membrane. It is found in the golgi apparatus. Its primary physiological function is unclear. Has cytoprotective activity against internal or environmental stresses. May play a role in neuronal development and synaptic plasticity. May be required for neuronal myelin sheath maintenance. May play a role in iron uptake and iron homeostasis. Soluble oligomers are toxic to cultured neuroblastoma cells and induce apoptosis (in vitro). Association with GPC1 (via its heparan sulfate chains) targets PRNP to lipid rafts. Also provides Cu(2+) or Zn(2+) for the ascorbate-mediated GPC1 deaminase degradation of its heparan sulfate side chains. The polypeptide is Major prion protein 1 (Tragelaphus strepsiceros (Greater kudu)).